The sequence spans 176 residues: ADP-ribosylation factor-like protein 11 (176 aa).

Gly2 carries N-myristoyl glycine lipidation. Residues 19-26 (GLDSAGKT), 63-67 (DIGGQ), and 122-125 (NKQE) contribute to the GTP site.

It belongs to the small GTPase superfamily. Arf family.

Functionally, may play a role in apoptosis. May act as a tumor suppressor. The chain is ADP-ribosylation factor-like protein 11 (Arl11) from Mus musculus (Mouse).